The sequence spans 121 residues: MGRIFLDHIGGTRLFSCANCDTILTNRSELISTRFTGATGRAFLFNKVVNLQYSEVQDRVMLTGRHMVRDVSCKNCNSKLGWIYEFATEDSQRYKEGRVILERALVRESEGFEEHVPSDNS.

The Yippee domain occupies 13-110; the sequence is RLFSCANCDT…LERALVRESE (98 aa). 4 residues coordinate Zn(2+): Cys17, Cys20, Cys73, and Cys76. Ser118 carries the post-translational modification Phosphoserine.

This sequence belongs to the yippee family. Identified in the CTLH complex that contains GID4, RANBP9 and/or RANBP10, MKLN1, MAEA, RMND5A (or alternatively its paralog RMND5B), GID8, ARMC8, WDR26 and YPEL5. Within this complex, MAEA, RMND5A (or alternatively its paralog RMND5B), GID8, WDR26, and RANBP9 and/or RANBP10 form the catalytic core, while GID4, MKLN1, ARMC8 and YPEL5 have ancillary roles. Interacts with RANBP9 and RANBP10.

It is found in the nucleus. The protein localises to the cytoplasm. The protein resides in the cytoskeleton. It localises to the microtubule organizing center. Its subcellular location is the centrosome. It is found in the spindle pole. The protein localises to the midbody. Its function is as follows. Component of the CTLH E3 ubiquitin-protein ligase complex that selectively accepts ubiquitin from UBE2H and mediates ubiquitination and subsequent proteasomal degradation of the transcription factor HBP1. Required for normal cell proliferation. In Bos taurus (Bovine), this protein is Protein yippee-like 5 (YPEL5).